Here is a 323-residue protein sequence, read N- to C-terminus: Fructose-1,6-bisphosphatase class 1 (323 aa).

E84, D103, L105, and D106 together coordinate Mg(2+). Residues 106 to 109 (DGSS), N198, and K264 each bind substrate. E270 provides a ligand contact to Mg(2+).

The protein belongs to the FBPase class 1 family. Homotetramer. It depends on Mg(2+) as a cofactor.

It is found in the cytoplasm. It catalyses the reaction beta-D-fructose 1,6-bisphosphate + H2O = beta-D-fructose 6-phosphate + phosphate. Its pathway is carbohydrate biosynthesis; gluconeogenesis. This chain is Fructose-1,6-bisphosphatase class 1, found in Cellvibrio japonicus (strain Ueda107) (Pseudomonas fluorescens subsp. cellulosa).